The sequence spans 55 residues: MAKAVTIKIKLVSTADTGFYYVAKKNSRTMTDKMTKKKYDPVARKHVEFKEAKIK.

The protein belongs to the bacterial ribosomal protein bL33 family.

The polypeptide is Large ribosomal subunit protein bL33 (Rhodopseudomonas palustris (strain HaA2)).